Reading from the N-terminus, the 234-residue chain is Protein rgg8 (234 aa).

It localises to the cytoplasm. It is found in the nucleus. This Schizosaccharomyces pombe (strain 972 / ATCC 24843) (Fission yeast) protein is Protein rgg8 (rgg8).